The primary structure comprises 286 residues: MASLRELKGRIESTKKTKQITGAMQLVSASKMSKAEQNARGFVPYADKLQEVVSSIANANTDAQHPMLMKREVKKTGYLIITSDRGLVGAYNSHILKNLVNTIEKNHTSKDEYTIIVLGRKGYDYCRKRGLPVSKSVLGVPDHPTFADVKELASETVQMYADGDIDELNIIYNHYVSAISQVVTNKQLLPIDNLDESGAATSDYEFDPNQEQILEVLLPQYAESLIFGALLDGKASEHAASMTAMRSATDNASDLIDDLSLSYNRARQAAITQEITEIVGGVAALE.

Belongs to the ATPase gamma chain family. In terms of assembly, F-type ATPases have 2 components, CF(1) - the catalytic core - and CF(0) - the membrane proton channel. CF(1) has five subunits: alpha(3), beta(3), gamma(1), delta(1), epsilon(1). CF(0) has three main subunits: a, b and c.

Its subcellular location is the cell membrane. Produces ATP from ADP in the presence of a proton gradient across the membrane. The gamma chain is believed to be important in regulating ATPase activity and the flow of protons through the CF(0) complex. The sequence is that of ATP synthase gamma chain from Oceanobacillus iheyensis (strain DSM 14371 / CIP 107618 / JCM 11309 / KCTC 3954 / HTE831).